A 536-amino-acid chain; its full sequence is RRRRSQGSEVNLTGQGQPCHSCGERCPGFLAHKWRKICQHCQCPWEEHGHTASNQDLERSLCRLVSGSQRDSLCDSSSDSSVEKYAWVPSGLNPVQVHHFFKCFPEKKIPYINSPGEKYRLKQLLHQLPPHDSEARYCCSLQGEEEEELLLLFSQKRRLENLGRGCVRPISGTMSGTVCQQCGHQINVGEVAVFASRAGLGFCWHPQCFTCAQCLELLCDLIYFYQDGKVYCGRHHAELKRPRCLACDEVIFSLECTQAEGFHWHTRHFCCFECECPLGGQRYIMKDQRPFCCSCYERLYAQYCDSCGECIGIDEGQLTYGGQHWHASESCFCCGRCGECLLGRPFLPRHGQIYCSRSCSMLHTKSERPFSPSQMDLSFQKETKDVGTSTNHELEGDSITNCTLAGSRTSLSVIDQTPTQAAPARSLHSSLRGAPKGFSRECPNRRSLPDLSSHTRTPTRVTFQLPSHSEIKESISFSRPSFTSSSSSDEEEGYFLGEPIPLPPFLRSPGYTAPPTHVPTSTRKQKKKKDKSCFLS.

The PET domain occupies 66–175 (SGSQRDSLCD…CVRPISGTMS (110 aa)). LIM zinc-binding domains lie at 177 to 241 (TVCQ…ELKR), 242 to 302 (PRCL…LYAQ), and 305 to 366 (DSCG…HTKS). The interval 418 to 536 (PTQAAPARSL…KKKDKSCFLS (119 aa)) is disordered. Over residues 438–448 (FSRECPNRRSL) the composition is skewed to basic and acidic residues. Positions 450-467 (DLSSHTRTPTRVTFQLPS) are enriched in polar residues. The span at 474–487 (SISFSRPSFTSSSS) shows a compositional bias: low complexity.

This sequence belongs to the prickle / espinas / testin family. Interacts with vangl2 via its C-terminus. The vangl2-dependent membrane recruitment of prickle3 is a prerequisite for its polarization. Interacts with wtip. Wtip is involved in the recruitment of prickle3 to the basal body.

Its subcellular location is the cytoplasm. It is found in the cell membrane. The protein resides in the mitochondrion. In terms of biological role, involved in the planar cell polarity (PCP) pathway that is essential for the polarization of epithelial cells during morphogenetic processes, including gastrulation and neurulation. PCP is maintained by two molecular modules, the global and the core modules. Proteins of the core module include the proteins Frizzled (Fz), Disheveled (Dsh), Van Gogh (Vang), Prickle (Pk), Flamingo (Fmi, Celsr) and Diego (Dgo). The core module proteins develop subcellular asymmetry, accumulating in two groups on opposite sides of epithelial cells. Distinct proximal (Vang, Pk and Fmi) and distal (Fz, Dsh, Dgo and Fmi) complexes segregate to opposite sides of the cell, where they interact with the opposite complex in the neighboring cell at or near the adherents junctions. Directional information to orient polarization with respect to the tissue axes is provided by the global module which involves Wnt proteins. Involved in the organization of the basal body. Involved in cilia growth and positioning. Required for proper assembly, stability, and function of mitochondrial membrane ATP synthase (mitochondrial complex V). The sequence is that of Prickle planar cell polarity protein 3-B (prickle3-b) from Xenopus laevis (African clawed frog).